A 125-amino-acid chain; its full sequence is Somatostatin-2 (125 aa).

The N-terminal stretch at 1 to 24 (MQCIRCPAILALLALVLCGPSVSS) is a signal peptide. Glutamine 25 is modified (pyrrolidone carboxylic acid). Residues 25–97 (QLDREQSDNQ…ATGGRMNLER (73 aa)) constitute a propeptide that is removed on maturation. Residues 82–107 (AEDASMATGGRMNLERSVDSTNNLPP) are disordered. Cysteine 114 and cysteine 125 are oxidised to a cystine. 5-hydroxylysine is present on lysine 120.

It belongs to the somatostatin family.

The protein resides in the secreted. Functionally, somatostatin inhibits the release of somatotropin. The protein is Somatostatin-2 (sst2) of Lophius americanus (American angler).